We begin with the raw amino-acid sequence, 145 residues long: ATP synthase epsilon chain (145 aa).

The segment covering 93–104 has biased composition (basic and acidic residues); sequence AEAEKARARAQE. The tract at residues 93-113 is disordered; it reads AEAEKARARAQEALKNPDASK.

Belongs to the ATPase epsilon chain family. In terms of assembly, F-type ATPases have 2 components, CF(1) - the catalytic core - and CF(0) - the membrane proton channel. CF(1) has five subunits: alpha(3), beta(3), gamma(1), delta(1), epsilon(1). CF(0) has three main subunits: a, b and c.

The protein localises to the cell inner membrane. Produces ATP from ADP in the presence of a proton gradient across the membrane. This chain is ATP synthase epsilon chain, found in Francisella philomiragia subsp. philomiragia (strain ATCC 25017 / CCUG 19701 / FSC 153 / O#319-036).